The sequence spans 700 residues: DNA ligase (700 aa).

NAD(+) contacts are provided by residues Asp-61–Asp-65, Ser-110–Leu-111, and Glu-141. The active-site N6-AMP-lysine intermediate is Lys-143. Residues Arg-164, Glu-202, Lys-321, and Lys-345 each contribute to the NAD(+) site. Zn(2+) contacts are provided by Cys-439, Cys-442, Cys-457, and Cys-462. Positions Ala-619–Lys-700 constitute a BRCT domain.

Belongs to the NAD-dependent DNA ligase family. LigA subfamily. Mg(2+) is required as a cofactor. It depends on Mn(2+) as a cofactor.

It carries out the reaction NAD(+) + (deoxyribonucleotide)n-3'-hydroxyl + 5'-phospho-(deoxyribonucleotide)m = (deoxyribonucleotide)n+m + AMP + beta-nicotinamide D-nucleotide.. Functionally, DNA ligase that catalyzes the formation of phosphodiester linkages between 5'-phosphoryl and 3'-hydroxyl groups in double-stranded DNA using NAD as a coenzyme and as the energy source for the reaction. It is essential for DNA replication and repair of damaged DNA. This chain is DNA ligase, found in Hydrogenobaculum sp. (strain Y04AAS1).